Reading from the N-terminus, the 220-residue chain is 7-cyano-7-deazaguanine synthase (220 aa).

Residue phenylalanine 10–leucine 20 coordinates ATP. Residues cysteine 186, cysteine 195, cysteine 198, and cysteine 201 each coordinate Zn(2+).

The protein belongs to the QueC family. In terms of assembly, homodimer. The cofactor is Zn(2+).

The enzyme catalyses 7-carboxy-7-deazaguanine + NH4(+) + ATP = 7-cyano-7-deazaguanine + ADP + phosphate + H2O + H(+). Its pathway is purine metabolism; 7-cyano-7-deazaguanine biosynthesis. Its function is as follows. Catalyzes the ATP-dependent conversion of 7-carboxy-7-deazaguanine (CDG) to 7-cyano-7-deazaguanine (preQ(0)). This is 7-cyano-7-deazaguanine synthase from Bacillus thuringiensis (strain Al Hakam).